The following is a 159-amino-acid chain: Crossover junction endodeoxyribonuclease RuvC (159 aa).

Residues aspartate 7, glutamate 67, and aspartate 139 contribute to the active site. Positions 7, 67, and 139 each coordinate Mg(2+).

Belongs to the RuvC family. Homodimer which binds Holliday junction (HJ) DNA. The HJ becomes 2-fold symmetrical on binding to RuvC with unstacked arms; it has a different conformation from HJ DNA in complex with RuvA. In the full resolvosome a probable DNA-RuvA(4)-RuvB(12)-RuvC(2) complex forms which resolves the HJ. Requires Mg(2+) as cofactor.

It is found in the cytoplasm. The catalysed reaction is Endonucleolytic cleavage at a junction such as a reciprocal single-stranded crossover between two homologous DNA duplexes (Holliday junction).. Its function is as follows. The RuvA-RuvB-RuvC complex processes Holliday junction (HJ) DNA during genetic recombination and DNA repair. Endonuclease that resolves HJ intermediates. Cleaves cruciform DNA by making single-stranded nicks across the HJ at symmetrical positions within the homologous arms, yielding a 5'-phosphate and a 3'-hydroxyl group; requires a central core of homology in the junction. The consensus cleavage sequence is 5'-(A/T)TT(C/G)-3'. Cleavage occurs on the 3'-side of the TT dinucleotide at the point of strand exchange. HJ branch migration catalyzed by RuvA-RuvB allows RuvC to scan DNA until it finds its consensus sequence, where it cleaves and resolves the cruciform DNA. This Thermosynechococcus vestitus (strain NIES-2133 / IAM M-273 / BP-1) protein is Crossover junction endodeoxyribonuclease RuvC.